A 413-amino-acid chain; its full sequence is Multifunctional CCA protein (413 aa).

ATP contacts are provided by Gly8 and Arg11. 2 residues coordinate CTP: Gly8 and Arg11. Asp21 and Asp23 together coordinate Mg(2+). The ATP site is built by Arg91, Arg143, and Arg146. CTP-binding residues include Arg91, Arg143, and Arg146. Residues 232 to 333 form the HD domain; it reads TGVHVMMVVD…VRFFERSDAL (102 aa).

This sequence belongs to the tRNA nucleotidyltransferase/poly(A) polymerase family. Bacterial CCA-adding enzyme type 1 subfamily. Monomer. Can also form homodimers and oligomers. Mg(2+) is required as a cofactor. It depends on Ni(2+) as a cofactor.

It carries out the reaction a tRNA precursor + 2 CTP + ATP = a tRNA with a 3' CCA end + 3 diphosphate. It catalyses the reaction a tRNA with a 3' CCA end + 2 CTP + ATP = a tRNA with a 3' CCACCA end + 3 diphosphate. Its function is as follows. Catalyzes the addition and repair of the essential 3'-terminal CCA sequence in tRNAs without using a nucleic acid template. Adds these three nucleotides in the order of C, C, and A to the tRNA nucleotide-73, using CTP and ATP as substrates and producing inorganic pyrophosphate. tRNA 3'-terminal CCA addition is required both for tRNA processing and repair. Also involved in tRNA surveillance by mediating tandem CCA addition to generate a CCACCA at the 3' terminus of unstable tRNAs. While stable tRNAs receive only 3'-terminal CCA, unstable tRNAs are marked with CCACCA and rapidly degraded. The chain is Multifunctional CCA protein from Burkholderia ambifaria (strain ATCC BAA-244 / DSM 16087 / CCUG 44356 / LMG 19182 / AMMD) (Burkholderia cepacia (strain AMMD)).